The following is a 39-amino-acid chain: Photosystem II reaction center protein J (39 aa).

A helical transmembrane segment spans residues 7-27 (IPLWLIGTIVGILVIGLIGIY).

The protein belongs to the PsbJ family. As to quaternary structure, PSII is composed of 1 copy each of membrane proteins PsbA, PsbB, PsbC, PsbD, PsbE, PsbF, PsbH, PsbI, PsbJ, PsbK, PsbL, PsbM, PsbT, PsbX, PsbY, PsbZ, Psb30/Ycf12, at least 3 peripheral proteins of the oxygen-evolving complex and a large number of cofactors. It forms dimeric complexes.

The protein localises to the plastid. It localises to the chloroplast thylakoid membrane. One of the components of the core complex of photosystem II (PSII). PSII is a light-driven water:plastoquinone oxidoreductase that uses light energy to abstract electrons from H(2)O, generating O(2) and a proton gradient subsequently used for ATP formation. It consists of a core antenna complex that captures photons, and an electron transfer chain that converts photonic excitation into a charge separation. The sequence is that of Photosystem II reaction center protein J from Welwitschia mirabilis (Tree tumbo).